Consider the following 487-residue polypeptide: Probable cobyric acid synthase (487 aa).

The GATase cobBQ-type domain maps to aspartate 249 to phenylalanine 435. The active-site Nucleophile is cysteine 328. Histidine 427 is an active-site residue.

Belongs to the CobB/CobQ family. CobQ subfamily.

The protein operates within cofactor biosynthesis; adenosylcobalamin biosynthesis. Catalyzes amidations at positions B, D, E, and G on adenosylcobyrinic A,C-diamide. NH(2) groups are provided by glutamine, and one molecule of ATP is hydrogenolyzed for each amidation. In Methanocella arvoryzae (strain DSM 22066 / NBRC 105507 / MRE50), this protein is Probable cobyric acid synthase.